Reading from the N-terminus, the 366-residue chain is Alanine racemase (366 aa).

Lys40 serves as the catalytic Proton acceptor; specific for D-alanine. Lys40 carries the post-translational modification N6-(pyridoxal phosphate)lysine. Position 136 (Arg136) interacts with substrate. The active-site Proton acceptor; specific for L-alanine is the Tyr263. A substrate-binding site is contributed by Met310.

Belongs to the alanine racemase family. Requires pyridoxal 5'-phosphate as cofactor.

The enzyme catalyses L-alanine = D-alanine. It functions in the pathway amino-acid biosynthesis; D-alanine biosynthesis; D-alanine from L-alanine: step 1/1. Its function is as follows. Catalyzes the interconversion of L-alanine and D-alanine. May also act on other amino acids. The sequence is that of Alanine racemase (alr) from Streptococcus pyogenes serotype M1.